Reading from the N-terminus, the 206-residue chain is Hypoxanthine-guanine phosphoribosyltransferase (206 aa).

Residues 110–118, K154, and 181–187 contribute to the GMP site; these read DEVDDTRTT and WIMYPWE. D114 (proton acceptor) is an active-site residue.

Belongs to the purine/pyrimidine phosphoribosyltransferase family. As to quaternary structure, dimer. Mg(2+) serves as cofactor.

The protein localises to the endoplasmic reticulum. It carries out the reaction IMP + diphosphate = hypoxanthine + 5-phospho-alpha-D-ribose 1-diphosphate. It catalyses the reaction GMP + diphosphate = guanine + 5-phospho-alpha-D-ribose 1-diphosphate. Functionally, converts guanine to guanosine monophosphate, and hypoxanthine to inosine monophosphate. Transfers the 5-phosphoribosyl group from 5-phosphoribosylpyrophosphate onto the purine. Plays a central role in the generation of purine nucleotides through the purine salvage pathway. The protein is Hypoxanthine-guanine phosphoribosyltransferase (hpt1) of Schizosaccharomyces pombe (strain 972 / ATCC 24843) (Fission yeast).